The primary structure comprises 574 residues: 2-succinyl-5-enolpyruvyl-6-hydroxy-3-cyclohexene-1-carboxylate synthase (574 aa).

This sequence belongs to the TPP enzyme family. MenD subfamily. In terms of assembly, homodimer. Mg(2+) serves as cofactor. The cofactor is Mn(2+). Thiamine diphosphate is required as a cofactor.

It carries out the reaction isochorismate + 2-oxoglutarate + H(+) = 5-enolpyruvoyl-6-hydroxy-2-succinyl-cyclohex-3-ene-1-carboxylate + CO2. It participates in quinol/quinone metabolism; 1,4-dihydroxy-2-naphthoate biosynthesis; 1,4-dihydroxy-2-naphthoate from chorismate: step 2/7. It functions in the pathway cofactor biosynthesis; phylloquinone biosynthesis. In terms of biological role, catalyzes the thiamine diphosphate-dependent decarboxylation of 2-oxoglutarate and the subsequent addition of the resulting succinic semialdehyde-thiamine pyrophosphate anion to isochorismate to yield 2-succinyl-5-enolpyruvyl-6-hydroxy-3-cyclohexene-1-carboxylate (SEPHCHC). In Synechococcus sp. (strain RCC307), this protein is 2-succinyl-5-enolpyruvyl-6-hydroxy-3-cyclohexene-1-carboxylate synthase.